Reading from the N-terminus, the 224-residue chain is Putative tyrosine-protein phosphatase OCA6 (224 aa).

Threonine 2 is subject to Phosphothreonine. The Tyrosine-protein phosphatase domain maps to 8–170; sequence QFSTVQPNLY…FNSEIEVDDL (163 aa). Residue cysteine 114 is the Phosphocysteine intermediate of the active site.

Belongs to the protein-tyrosine phosphatase family.

Its subcellular location is the cytoplasm. The enzyme catalyses O-phospho-L-tyrosyl-[protein] + H2O = L-tyrosyl-[protein] + phosphate. Functionally, required for replication of Brome mosaic virus (BMV). The polypeptide is Putative tyrosine-protein phosphatase OCA6 (OCA6) (Saccharomyces cerevisiae (strain ATCC 204508 / S288c) (Baker's yeast)).